A 70-amino-acid chain; its full sequence is Small ribosomal subunit protein bS21 (70 aa).

This sequence belongs to the bacterial ribosomal protein bS21 family.

The polypeptide is Small ribosomal subunit protein bS21 (Nitratidesulfovibrio vulgaris (strain ATCC 29579 / DSM 644 / CCUG 34227 / NCIMB 8303 / VKM B-1760 / Hildenborough) (Desulfovibrio vulgaris)).